The chain runs to 467 residues: MSDDKSQIKIKFFTNEEDVSLQVSDAPLYVPVSLKRYGLSEVVNQLLGNDGENDDSKPIPFDFLIDGVLLRTSIQDYLTKNGLSSETFLSLEYTRAVLPPSFLASFNNEDWISSLDTINKTLPSVTLSNMMISQPKILSGSYDGIVRTYNMSGNVEKQYVGHSGPIRAVKWVSPTRIVSAGNDRQVRLWKTSADDGSIPEEDEEAEDGRTLAILEGHKAPVVALAVENTSNRILSAGYDHSIGFWSTNYKEMTTIQPLEYDSNVLSSSSKKRRKMALQDSTIRRRSPLALLDSHTQPVEDVIFDNTDATVGYSVSQDHTIKTWDLVTSRCIDTRSTGYSLLSIVQLPKSKLLATGSSARHINLHDPRISNNTTEQTTSKLVGHTNFVVSLAASPNNDNMFASGSHDGTVKVWDIRTDKSLYTITRESPEAVKGADKVFAVSWDNEIGIISGGQDKKIQINKGSDISK.

Positions 8 to 95 (IKIKFFTNEE…ETFLSLEYTR (88 aa)) are ubiquitin-like (UBL) domain. Residues 105 to 467 (SFNNEDWISS…QINKGSDISK (363 aa)) are sufficient for interaction with ERB1 and association with 66S pre-ribosomes. WD repeat units follow at residues 120–159 (KTLPSVTLSNMMISQPKILSGSYDGIVRTYNMSGNVEKQY), 161–199 (GHSGPIRAVKWVSPTRIVSAGNDRQVRLWKTSADDGSIP), 216–255 (GHKAPVVALAVENTSNRILSAGYDHSIGFWSTNYKEMTTI), 293–333 (SHTQ…CIDT), 335–374 (STGYSLLSIVQLPKSKLLATGSSARHINLHDPRISNNTTE), 382–422 (GHTN…SLYT), and 432–467 (KGADKVFAVSWDNEIGIISGGQDKKIQINKGSDISK).

It belongs to the WD repeat WDR12/YTM1 family. Component of the NOP7 complex, composed of ERB1, NOP7 and YTM1. The complex is held together by ERB1, which interacts with NOP7 via its N-terminal domain and with YTM1 via a high-affinity interaction between the seven-bladed beta-propeller domains of the 2 proteins. The NOP7 complex associates with the 66S pre-ribosome. Interacts (via UBL domain) with MDN1 (via VWFA/MIDAS domain).

The protein resides in the nucleus. It localises to the nucleolus. It is found in the nucleoplasm. Its function is as follows. Component of the NOP7 complex, which is required for maturation of the 25S and 5.8S ribosomal RNAs and formation of the 60S ribosome. The polypeptide is Ribosome biogenesis protein YTM1 (Scheffersomyces stipitis (strain ATCC 58785 / CBS 6054 / NBRC 10063 / NRRL Y-11545) (Yeast)).